The chain runs to 229 residues: Clathrin light chain B (229 aa).

2 stretches are compositionally biased toward low complexity: residues 1–17 (MAED…GAPE) and 45–58 (GAPA…AQPG). Residues 1-70 (MAEDFGFFSS…SGAGSEDMST (70 aa)) form a disordered region. Phosphoserine occurs at positions 11 and 13. Residues 93-155 (ADRLTQEPES…QVEKNKINNR (63 aa)) are involved in binding clathrin heavy chain. Phosphothreonine is present on T187. A disulfide bridge connects residues C199 and C209. K204 is modified (N6-acetyllysine). S217 is modified (phosphoserine).

Belongs to the clathrin light chain family. As to quaternary structure, clathrin coats are formed from molecules containing 3 heavy chains and 3 light chains. Interacts (via N-terminus) with HIP1. Interacts with HIP1R.

It localises to the cytoplasmic vesicle membrane. The protein resides in the membrane. It is found in the coated pit. Clathrin is the major protein of the polyhedral coat of coated pits and vesicles. The sequence is that of Clathrin light chain B (Cltb) from Mus musculus (Mouse).